The following is a 174-amino-acid chain: MIPAGLANPFAALFGGGTPIDFGKNFKDNRRILGDGKTYRGLIFGSLCGTLIGLLQILLAPHIAPYLAGFIDPSLLVGYSYIALITMPFGALLGDIVKSFFKRRLGFERGAMLPIADQLDFVAGAWVLTFLLDPEWLLANFTIWVAIAVILIIPVFHVAFNIAGYKLGKKDVPW.

Transmembrane regions (helical) follow at residues 51–71 (LIGL…AGFI), 74–94 (SLLV…ALLG), 112–132 (MLPI…TFLL), and 136–156 (WLLA…IPVF).

The protein belongs to the CDP-archaeol synthase family. Mg(2+) is required as a cofactor.

Its subcellular location is the cell membrane. It catalyses the reaction 2,3-bis-O-(geranylgeranyl)-sn-glycerol 1-phosphate + CTP + H(+) = CDP-2,3-bis-O-(geranylgeranyl)-sn-glycerol + diphosphate. It functions in the pathway membrane lipid metabolism; glycerophospholipid metabolism. Catalyzes the formation of CDP-2,3-bis-(O-geranylgeranyl)-sn-glycerol (CDP-archaeol) from 2,3-bis-(O-geranylgeranyl)-sn-glycerol 1-phosphate (DGGGP) and CTP. This reaction is the third ether-bond-formation step in the biosynthesis of archaeal membrane lipids. In Methanocella arvoryzae (strain DSM 22066 / NBRC 105507 / MRE50), this protein is CDP-archaeol synthase.